The primary structure comprises 261 residues: Small ribosomal subunit protein uS2 (261 aa).

It belongs to the universal ribosomal protein uS2 family.

The sequence is that of Small ribosomal subunit protein uS2 from Enterococcus faecalis (strain ATCC 700802 / V583).